A 456-amino-acid polypeptide reads, in one-letter code: UDP-N-acetylmuramate--L-alanine ligase (456 aa).

112–118 is a binding site for ATP; it reads GAHGKTS.

It belongs to the MurCDEF family.

It localises to the cytoplasm. The catalysed reaction is UDP-N-acetyl-alpha-D-muramate + L-alanine + ATP = UDP-N-acetyl-alpha-D-muramoyl-L-alanine + ADP + phosphate + H(+). It participates in cell wall biogenesis; peptidoglycan biosynthesis. Its function is as follows. Cell wall formation. This is UDP-N-acetylmuramate--L-alanine ligase from Desulforapulum autotrophicum (strain ATCC 43914 / DSM 3382 / VKM B-1955 / HRM2) (Desulfobacterium autotrophicum).